We begin with the raw amino-acid sequence, 413 residues long: Multifunctional CCA protein (413 aa).

2 residues coordinate ATP: G8 and R11. CTP is bound by residues G8 and R11. Mg(2+) contacts are provided by D21 and D23. R91, R137, and R140 together coordinate ATP. CTP contacts are provided by R91, R137, and R140. The HD domain occupies 228 to 329; it reads TGIHTLMTLS…VKLFDSIDAW (102 aa).

This sequence belongs to the tRNA nucleotidyltransferase/poly(A) polymerase family. Bacterial CCA-adding enzyme type 1 subfamily. As to quaternary structure, monomer. Can also form homodimers and oligomers. The cofactor is Mg(2+). Ni(2+) is required as a cofactor.

The catalysed reaction is a tRNA precursor + 2 CTP + ATP = a tRNA with a 3' CCA end + 3 diphosphate. It carries out the reaction a tRNA with a 3' CCA end + 2 CTP + ATP = a tRNA with a 3' CCACCA end + 3 diphosphate. Catalyzes the addition and repair of the essential 3'-terminal CCA sequence in tRNAs without using a nucleic acid template. Adds these three nucleotides in the order of C, C, and A to the tRNA nucleotide-73, using CTP and ATP as substrates and producing inorganic pyrophosphate. tRNA 3'-terminal CCA addition is required both for tRNA processing and repair. Also involved in tRNA surveillance by mediating tandem CCA addition to generate a CCACCA at the 3' terminus of unstable tRNAs. While stable tRNAs receive only 3'-terminal CCA, unstable tRNAs are marked with CCACCA and rapidly degraded. In Citrobacter koseri (strain ATCC BAA-895 / CDC 4225-83 / SGSC4696), this protein is Multifunctional CCA protein.